The primary structure comprises 234 residues: Glutathione S-transferase sirG (234 aa).

Residues 15-99 (LYVVKATPTS…YLTDAYDHEG (85 aa)) form the GST N-terminal domain. Residues 105 to 230 (DLWERTQVNN…KALSQKFRPS (126 aa)) form the GST C-terminal domain.

Belongs to the GST superfamily.

The catalysed reaction is RX + glutathione = an S-substituted glutathione + a halide anion + H(+). It functions in the pathway mycotoxin biosynthesis. Its function is as follows. Glutathione S-transferase; part of the gene cluster that mediates the biosynthesis of sirodesmin PL, an epipolythiodioxopiperazine (ETP) characterized by a disulfide bridged cyclic dipeptide and that acts as a phytotoxin which is involved in the blackleg didease of canola. SirD catalyzes the O-prenylation of L-tyrosine (L-Tyr) in the presence of dimethylallyl diphosphate (DMAPP) to yield 4-O-dimethylallyl-L-Tyr, and therefore represents probably the first pathway-specific enzyme in the biosynthesis of sirodesmin PL. 4-O-dimethylallyl-L-Tyr, then undergoes condensation with L-Ser in a reaction catalyzed by the non-ribosomal peptide synthase sirP to form the diketopiperazine (DKP) backbone. Further bishydroxylation of the DKP performed by the cytochrome P450 monooxygenase sirC leads to the production of the intermediate phomamide. This step is essential to form the reactive thiol group required for toxicity of sirodesmin PL. The next steps of sirodesmin biosynthesis are not well understood yet, but some predictions could be made from intermediate compounds identification. Phomamide is converted into phomalizarine via oxidation, probably by sirT. Further oxidation, methylation (by sirM or sirN) and reduction steps convert phomalizarine to deacetyl sirodesmin. Finally, acetyltransferase sirH probably acetylates deacetyl sirodesmin to produce sirodesmin PL. The polypeptide is Glutathione S-transferase sirG (Leptosphaeria maculans (Blackleg fungus)).